A 133-amino-acid polypeptide reads, in one-letter code: Rodlin protein RdlB (133 aa).

Positions 1 to 28 are cleaved as a signal peptide; that stretch reads MIKKVVAYAAIAASVMGASAAAAPQAMA. 2 amyloid-forming regions span residues 45 to 57 and 59 to 70; these read QYFG…GNMS and QMALIQGSFNKP. Residues 45–70 form a required for amyloid formation region; that stretch reads QYFGNSMTTGNMSPQMALIQGSFNKP.

Belongs to the rodlin family.

It is found in the secreted. Its subcellular location is the cell wall. The protein localises to the spore wall. Functionally, forms part of the rodlet layer on the spore surface; despite their high similarity both RdlA and RdlB are required for rodlet formation. Plays a role in cell adhesion to polystyrene plates. Forms amyloid-like fibrils in vitro composed of stacked beta-sheets. The protein is Rodlin protein RdlB of Streptomyces coelicolor (strain ATCC BAA-471 / A3(2) / M145).